Reading from the N-terminus, the 81-residue chain is Putative membrane protein insertion efficiency factor (81 aa).

It belongs to the UPF0161 family.

The protein localises to the cell inner membrane. In terms of biological role, could be involved in insertion of integral membrane proteins into the membrane. The chain is Putative membrane protein insertion efficiency factor from Pseudomonas syringae pv. tomato (strain ATCC BAA-871 / DC3000).